The sequence spans 509 residues: Photosystem II CP47 reaction center protein (509 aa).

6 helical membrane-spanning segments follow: residues 21 to 36 (AVHL…WAGS), 101 to 115 (IVLS…IWHW), 140 to 156 (GIHL…FGAF), 203 to 218 (IAAG…FHLT), 237 to 252 (VLSS…AFIT), and 457 to 472 (NFAL…HGSR).

This sequence belongs to the PsbB/PsbC family. PsbB subfamily. In terms of assembly, PSII is composed of 1 copy each of membrane proteins PsbA, PsbB, PsbC, PsbD, PsbE, PsbF, PsbH, PsbI, PsbJ, PsbK, PsbL, PsbM, PsbT, PsbX, PsbY, PsbZ, Psb30/Ycf12, at least 3 peripheral proteins of the oxygen-evolving complex and a large number of cofactors. It forms dimeric complexes. It depends on Binds multiple chlorophylls. PSII binds additional chlorophylls, carotenoids and specific lipids. as a cofactor.

The protein localises to the plastid. The protein resides in the chloroplast thylakoid membrane. Its function is as follows. One of the components of the core complex of photosystem II (PSII). It binds chlorophyll and helps catalyze the primary light-induced photochemical processes of PSII. PSII is a light-driven water:plastoquinone oxidoreductase, using light energy to abstract electrons from H(2)O, generating O(2) and a proton gradient subsequently used for ATP formation. This chain is Photosystem II CP47 reaction center protein, found in Porphyra purpurea (Red seaweed).